Consider the following 323-residue polypeptide: tRNA U34 carboxymethyltransferase (323 aa).

Residues lysine 91, tryptophan 105, lysine 110, glycine 130, 181-182 (IE), methionine 196, tyrosine 200, and arginine 315 contribute to the carboxy-S-adenosyl-L-methionine site.

This sequence belongs to the class I-like SAM-binding methyltransferase superfamily. CmoB family. In terms of assembly, homotetramer.

It catalyses the reaction carboxy-S-adenosyl-L-methionine + 5-hydroxyuridine(34) in tRNA = 5-carboxymethoxyuridine(34) in tRNA + S-adenosyl-L-homocysteine + H(+). Functionally, catalyzes carboxymethyl transfer from carboxy-S-adenosyl-L-methionine (Cx-SAM) to 5-hydroxyuridine (ho5U) to form 5-carboxymethoxyuridine (cmo5U) at position 34 in tRNAs. The chain is tRNA U34 carboxymethyltransferase from Edwardsiella ictaluri (strain 93-146).